The chain runs to 128 residues: Glycine cleavage system H protein (128 aa).

The Lipoyl-binding domain maps to 24-106 (VFCVGITDHA…YDEGWLFRIR (83 aa)). K65 is modified (N6-lipoyllysine).

This sequence belongs to the GcvH family. In terms of assembly, the glycine cleavage system is composed of four proteins: P, T, L and H. Requires (R)-lipoate as cofactor.

In terms of biological role, the glycine cleavage system catalyzes the degradation of glycine. The H protein shuttles the methylamine group of glycine from the P protein to the T protein. The chain is Glycine cleavage system H protein from Edwardsiella ictaluri (strain 93-146).